The primary structure comprises 339 residues: Annexin A2 (339 aa).

Position 2 is an N-acetylserine (S2). The segment at 2–24 (STVHEILCKLSLEGDHSTPPSAY) is S100A10-binding site. At Y24 the chain carries Phosphotyrosine; by SRC. S26 is modified (phosphoserine; by PKC). Annexin repeat units lie at residues 33–104 (FDAE…GLLK) and 105–176 (TPAQ…ALAK). K49 carries the N6-acetyllysine; alternate modification. K49 is covalently cross-linked (Glycyl lysine isopeptide (Lys-Gly) (interchain with G-Cter in SUMO1); alternate). Residue K49 forms a Glycyl lysine isopeptide (Lys-Gly) (interchain with G-Cter in SUMO2); alternate linkage. Position 152 is an N6-acetyllysine (K152). Position 184 is a phosphoserine (S184). Annexin repeat units follow at residues 189–261 (ELID…NLVQ) and 265–336 (NKPL…YLCG). The residue at position 199 (Y199) is a Phosphotyrosine. K227 carries the N6-acetyllysine modification.

Belongs to the annexin family. Heterotetramer containing 2 light chains of S100A10/p11 and 2 heavy chains of ANXA2/p36. Interacts with ATP1B1. Interacts with DYSF. Interacts with COCH. Interacts (via repeat Annexin 1) with PCSK9 (via the C-terminal domain); the interaction inhibits the degradation of LDLR. Interacts with CEACAM1 (via the cytoplasmic domain); this interaction is regulated by phosphorylation of CEACAM1. Interacts with APPL2 and APPL1; targets APPL2 to endosomes and acting in parallel to RAB5A. Interacts with S100A4. May interact with UBAP2. Interacts with PLEKHG4B; this interaction is required for PLEKHG4B localization to cell-cell adhesions. Post-translationally, ISGylated.

The protein resides in the secreted. Its subcellular location is the extracellular space. The protein localises to the extracellular matrix. It localises to the basement membrane. Its function is as follows. Calcium-regulated membrane-binding protein whose affinity for calcium is greatly enhanced by anionic phospholipids. It binds two calcium ions with high affinity. May be involved in heat-stress response. Inhibits PCSK9-enhanced LDLR degradation, probably reduces PCSK9 protein levels via a translational mechanism but also competes with LDLR for binding with PCSK9. Binds to endosomes damaged by phagocytosis of particulate wear debris and participates in endosomal membrane stabilization, thereby limiting NLRP3 inflammasome activation. Required for endothelial cell surface plasmin generation and may support fibrinolytic surveillance and neoangiogenesis. This Canis lupus familiaris (Dog) protein is Annexin A2 (ANXA2).